The following is a 557-amino-acid chain: Potassium-transporting ATPase potassium-binding subunit (557 aa).

Helical transmembrane passes span 5–25, 63–83, 132–152, 170–190, 253–273, 283–303, 329–349, 356–376, 379–399, 416–436, 484–504, and 526–546; these read GFLL…PLGS, LCAI…MLLG, GLTV…FALI, LLRI…LFFI, FVQM…FGEV, LLWA…WAEV, VLVS…AVIA, ALGG…FGGV, GLYG…LMIG, LTAL…ALAM, LLAF…MAIA, and LFVG…FIPA.

This sequence belongs to the KdpA family. As to quaternary structure, the system is composed of three essential subunits: KdpA, KdpB and KdpC.

The protein localises to the cell inner membrane. In terms of biological role, part of the high-affinity ATP-driven potassium transport (or Kdp) system, which catalyzes the hydrolysis of ATP coupled with the electrogenic transport of potassium into the cytoplasm. This subunit binds the periplasmic potassium ions and delivers the ions to the membrane domain of KdpB through an intramembrane tunnel. The sequence is that of Potassium-transporting ATPase potassium-binding subunit from Escherichia coli O9:H4 (strain HS).